We begin with the raw amino-acid sequence, 169 residues long: Peptide methionine sulfoxide reductase MsrA (169 aa).

Cys10 is an active-site residue.

This sequence belongs to the MsrA Met sulfoxide reductase family.

The enzyme catalyses L-methionyl-[protein] + [thioredoxin]-disulfide + H2O = L-methionyl-(S)-S-oxide-[protein] + [thioredoxin]-dithiol. It catalyses the reaction [thioredoxin]-disulfide + L-methionine + H2O = L-methionine (S)-S-oxide + [thioredoxin]-dithiol. Has an important function as a repair enzyme for proteins that have been inactivated by oxidation. Catalyzes the reversible oxidation-reduction of methionine sulfoxide in proteins to methionine. The protein is Peptide methionine sulfoxide reductase MsrA of Streptococcus pyogenes serotype M6 (strain ATCC BAA-946 / MGAS10394).